Here is a 49-residue protein sequence, read N- to C-terminus: uncharacterized protein (49 aa).

Residues 6 to 28 (IYPLTVFYFFAIEMSVFCYYNWF) traverse the membrane as a helical segment.

It localises to the membrane. This is an uncharacterized protein from Saccharomyces cerevisiae (strain ATCC 204508 / S288c) (Baker's yeast).